Here is a 202-residue protein sequence, read N- to C-terminus: Ras-related protein Rab-24 (202 aa).

14-21 (GYASVGKT) is a GTP binding site. Positions 35-43 (THTTIGGAF) match the Effector region motif. GTP contacts are provided by residues 61 to 65 (DTAGT) and 118 to 121 (TKLD). 2 S-geranylgeranyl cysteine lipidation sites follow: Cys-201 and Cys-202.

It belongs to the small GTPase superfamily. Rab family.

The protein resides in the endoplasmic reticulum-Golgi intermediate compartment. It is found in the endosome. Its subcellular location is the endoplasmic reticulum. It localises to the golgi apparatus. The protein localises to the membrane. Its function is as follows. May be involved in autophagy-related processes. This chain is Ras-related protein Rab-24 (rab24), found in Dictyostelium discoideum (Social amoeba).